The chain runs to 448 residues: MESERSCLLSSHDAGKGGSSSVSSASFNFINSIIGSGIIGLPYSMSQAGLPMGLLLLILVAFITDYSIILLVRGGNLSGTHSYQSLVRSTFGQIGYIIVSVLQFLYPFIAMISYNIIAGDTLTKVFMRIPGVGPGNILTERHFVIAMSTVLFTLPLSLYRDIAKLGKVSLLSMILTFGILMTVVVRAATLGPQIPASDDAWVFARWNAIQAVAVMSFALICHHNSFMIYGSLQEPTLSRWSLVTHISVGSSVLVSAVFAAAGYATFTVYTQGDIFENYCRSDNLATFGRFCYGVSIITTFPLECFVTREVISNALFKGGELSKSSHVIITLVIISATTAISLSYDCLGIVLELNGILSAVPLMFIFPSACFLKLSNERWCRGENLIASMILVAGVFVMIIGLIMMALFPQDCSHGAEMFYCSASNTSSTASPSNILQFINTTQNTSIV.

The interval 1–20 (MESERSCLLSSHDAGKGGSS) is disordered. The next 11 helical transmembrane spans lie at 22–42 (VSSASFNFINSIIGSGIIGLP), 52–72 (MGLLLLILVAFITDYSIILLV), 94–114 (IGYIIVSVLQFLYPFIAMISY), 143–163 (FVIAMSTVLFTLPLSLYRDIA), 165–185 (LGKVSLLSMILTFGILMTVVV), 200–220 (AWVFARWNAIQAVAVMSFALI), 246–266 (ISVGSSVLVSAVFAAAGYATF), 286–306 (TFGRFCYGVSIITTFPLECFV), 324–344 (SSHVIITLVIISATTAISLSY), 346–366 (CLGIVLELNGILSAVPLMFIF), and 389–409 (MILVAGVFVMIIGLIMMALFP). N-linked (GlcNAc...) asparagine glycosylation is found at asparagine 425, asparagine 440, and asparagine 444.

It belongs to the amino acid/polyamine transporter 2 family.

It is found in the membrane. Putative sodium-dependent amino acid/proton antiporter. This Danio rerio (Zebrafish) protein is Putative sodium-coupled neutral amino acid transporter 11 (slc38a11).